Reading from the N-terminus, the 419-residue chain is Zinc finger protein Pegasus (419 aa).

3 consecutive C2H2-type zinc fingers follow at residues 79–101 (LKCR…IRIH), 107–129 (HRCH…MRSH), and 135–158 (YKCE…RRRH). 2 disordered regions span residues 203–255 (LQKP…DQDM) and 310–360 (SVNT…TPVQ). Basic and acidic residues predominate over residues 208 to 228 (SEQHHLGDFTHDLPPHAHLHQ). Polar residues-rich tracts occupy residues 310–320 (SVNTAQASSPI) and 341–360 (ERTS…TPVQ). 2 C2H2-type zinc fingers span residues 366 to 388 (HHCP…MGCH) and 394 to 418 (FQCN…RGQH).

This sequence belongs to the Ikaros C2H2-type zinc-finger protein family. As to quaternary structure, probably self-associates.

It localises to the nucleus. Its function is as follows. Transcriptional repressor that binds the core 5'GNNTGTNG-3' DNA consensus sequence. The protein is Zinc finger protein Pegasus (ikzf5) of Danio rerio (Zebrafish).